The primary structure comprises 55 residues: Large ribosomal subunit protein bL33 (55 aa).

The protein belongs to the bacterial ribosomal protein bL33 family.

The sequence is that of Large ribosomal subunit protein bL33 from Paramagnetospirillum magneticum (strain ATCC 700264 / AMB-1) (Magnetospirillum magneticum).